The chain runs to 198 residues: Small ribosomal subunit protein uS11 (198 aa).

Composition is skewed to low complexity over residues 1–11 and 19–58; these read MSGTEAGAGEP and EAAQ…TAQP. Disordered regions lie at residues 1 to 72 and 178 to 198; these read MSGT…TPAD and DVTP…GRRV. Positions 187–198 are enriched in basic residues; that stretch reads TRKKGGKRGRRV.

Belongs to the universal ribosomal protein uS11 family. In terms of assembly, part of the 30S ribosomal subunit.

Located on the platform of the 30S subunit. The sequence is that of Small ribosomal subunit protein uS11 from Cenarchaeum symbiosum (strain A).